Consider the following 1423-residue polypeptide: DNA-directed RNA polymerase, mitochondrial (1423 aa).

Residues 1–73 (MLPRTASATR…RATVGFERHL (73 aa)) constitute a mitochondrion transit peptide. Residues 266–303 (NMPDNVDPDTFAQQQQQQQQQQQQQQEQQQQQDTSIDQ) are disordered. Low complexity predominate over residues 278–297 (QQQQQQQQQQQQQQEQQQQQ). Residues Asp-901 and Lys-970 contribute to the active site. Residues 1055–1064 (EFERSERSPH) are compositionally biased toward basic and acidic residues. Residues 1055–1087 (EFERSERSPHGDGTASGENITLAGNPRKSSAHK) are disordered. Residue Asp-1180 is part of the active site. The interval 1316–1342 (VRRGREMDEEGEVDGSEEAVEHEDGMH) is disordered. Over residues 1322–1336 (MDEEGEVDGSEEAVE) the composition is skewed to acidic residues.

It belongs to the phage and mitochondrial RNA polymerase family.

The protein localises to the mitochondrion. It catalyses the reaction RNA(n) + a ribonucleoside 5'-triphosphate = RNA(n+1) + diphosphate. DNA-dependent RNA polymerase catalyzes the transcription of DNA into RNA using the four ribonucleoside triphosphates as substrates. In Neurospora crassa (strain ATCC 24698 / 74-OR23-1A / CBS 708.71 / DSM 1257 / FGSC 987), this protein is DNA-directed RNA polymerase, mitochondrial (cyt-5).